The primary structure comprises 650 residues: XK-related protein 4 (650 aa).

Residues 1 to 15 are compositionally biased toward basic and acidic residues; sequence MAAKSDGRLKMKKSS. The disordered stretch occupies residues 1–44; sequence MAAKSDGRLKMKKSSDVAFTPLQNSDHSGSVQGLAPGLPSGSGA. A compositionally biased stretch (polar residues) spans 21–31; that stretch reads PLQNSDHSGSV. 2 helical membrane-spanning segments follow: residues 114-134 and 144-164; these read WILAAVAVYFADVGTDVWLAV and WFGLTLFFVVLGSLSVQVFSF. Position 200 is a phosphoserine (serine 200). The interval 200 to 238 is disordered; that stretch reads SAAGEGEARPSTPQRQASNASKSNIAAANSGSNSSGATR. Over residues 216–238 the composition is skewed to low complexity; it reads ASNASKSNIAAANSGSNSSGATR. A run of 8 helical transmembrane segments spans residues 248-268, 306-326, 331-351, 365-385, 396-418, 428-448, 457-477, and 487-507; these read CSFCIWLLQSLIHILQLGQIW, HLLATFLESAPQLVLQLCIIV, LQALQGFTAAASLVSLAWALA, KPISYMAVIIQFCWHFFTIAA, VFQLYFGIFIVLHWCIMTFWIVH, WEEIVFDMVVGIIYIFSWFNV, LFIYYFVILLENTALSALWYL, and FAIPALCVVFSSFLTGVVFML.

Belongs to the XK family. As to quaternary structure, homodimer; homodimerization takes place upon caspase cleavage. Interacts with the processed C-terminus of XRCC4 (protein XRCC4, C-terminus); interaction promotes the phospholipid scramblase activity. In terms of processing, undergoes proteolytic processing by caspase-3 (CASP3), caspase-6 (CASP6) and caspase-7 (CASP7) to generate the XK-related protein 4, processed form, leading to its activation.

It is found in the cell membrane. The enzyme catalyses a 1,2-diacyl-sn-glycero-3-phospho-L-serine(in) = a 1,2-diacyl-sn-glycero-3-phospho-L-serine(out). Phospholipid scramblase activity is activated upon caspase cleavage to generate the XK-related protein 4, processed form. Does not act prior the onset of apoptosis. With respect to regulation, homodimerizes upon caspase cleavage. Phospholipid scramblase activity is activated following interaction with the processed C-terminus of XRCC4 (protein XRCC4, C-terminus). Its function is as follows. Phospholipid scramblase that promotes phosphatidylserine exposure on apoptotic cell surface. Phosphatidylserine is a specific marker only present at the surface of apoptotic cells and acts as a specific signal for engulfment. The chain is XK-related protein 4 from Homo sapiens (Human).